The primary structure comprises 211 residues: Leucyl/phenylalanyl-tRNA--protein transferase (211 aa).

The protein belongs to the L/F-transferase family.

It is found in the cytoplasm. The enzyme catalyses N-terminal L-lysyl-[protein] + L-leucyl-tRNA(Leu) = N-terminal L-leucyl-L-lysyl-[protein] + tRNA(Leu) + H(+). It catalyses the reaction N-terminal L-arginyl-[protein] + L-leucyl-tRNA(Leu) = N-terminal L-leucyl-L-arginyl-[protein] + tRNA(Leu) + H(+). It carries out the reaction L-phenylalanyl-tRNA(Phe) + an N-terminal L-alpha-aminoacyl-[protein] = an N-terminal L-phenylalanyl-L-alpha-aminoacyl-[protein] + tRNA(Phe). Functions in the N-end rule pathway of protein degradation where it conjugates Leu, Phe and, less efficiently, Met from aminoacyl-tRNAs to the N-termini of proteins containing an N-terminal arginine or lysine. The polypeptide is Leucyl/phenylalanyl-tRNA--protein transferase (Flavobacterium psychrophilum (strain ATCC 49511 / DSM 21280 / CIP 103535 / JIP02/86)).